The chain runs to 288 residues: Ninja-family protein 6 (288 aa).

Disordered regions lie at residues 1–50 (MASR…KRPR) and 66–207 (LHAD…TRTG). Gly residues predominate over residues 12–23 (AGEGAGPPGDAG). The segment covering 76–86 (LPLLRTTSLPT) has biased composition (low complexity). The segment covering 91–103 (ERWRRREMQSRRR) has biased composition (basic and acidic residues). Residues 131–173 (RRSNASQGSNSASTTEQGIGGSMFNQSADAKSPSTSDNRNQND) are compositionally biased toward polar residues. Positions 195-207 (RLRTLGSLTTRTG) are enriched in low complexity.

This sequence belongs to the Ninja family.

It is found in the nucleus. This Zea mays (Maize) protein is Ninja-family protein 6.